The following is a 296-amino-acid chain: Probable endonuclease 4 (296 aa).

Zn(2+)-binding residues include histidine 68, histidine 109, glutamate 144, aspartate 178, histidine 181, histidine 213, aspartate 226, histidine 228, and glutamate 258.

Belongs to the AP endonuclease 2 family. It depends on Zn(2+) as a cofactor.

The enzyme catalyses Endonucleolytic cleavage to 5'-phosphooligonucleotide end-products.. Functionally, endonuclease IV plays a role in DNA repair. It cleaves phosphodiester bonds at apurinic or apyrimidinic (AP) sites, generating a 3'-hydroxyl group and a 5'-terminal sugar phosphate. This Staphylococcus epidermidis (strain ATCC 35984 / DSM 28319 / BCRC 17069 / CCUG 31568 / BM 3577 / RP62A) protein is Probable endonuclease 4.